Here is a 429-residue protein sequence, read N- to C-terminus: Phenylalanine--tRNA ligase, chloroplastic/mitochondrial (429 aa).

A chloroplast and mitochondrion-targeting transit peptide spans 1-53 (MTVFSVQSTIFSRASVALLSSNGFKRFSFVSSFSSSAAYSPPKMRKRRYPIVS). A54 carries the post-translational modification N-acetylalanine. Residues 163–166 (SAHQ), R185, 192–194 (THY), 199–201 (QME), E269, and F294 each bind substrate. Residues 338–429 (SKYPPCYKDI…VQKKLNVELR (92 aa)) enclose the FDX-ACB domain.

This sequence belongs to the class-II aminoacyl-tRNA synthetase family. Monomer.

The protein resides in the plastid. Its subcellular location is the chloroplast stroma. It localises to the mitochondrion matrix. It carries out the reaction tRNA(Phe) + L-phenylalanine + ATP = L-phenylalanyl-tRNA(Phe) + AMP + diphosphate + H(+). In terms of biological role, is responsible for the charging of tRNA(Phe) with phenylalanine in mitochondrial translation. The sequence is that of Phenylalanine--tRNA ligase, chloroplastic/mitochondrial from Arabidopsis thaliana (Mouse-ear cress).